Consider the following 291-residue polypeptide: MNSIKLEKNISLSNFTTWGIGGPAEWIAQPKNIEELKYVINWTNKKKIPCSVIGAGSNLLINDKGIKGLSLCMRNFKGIEIDKNNGIIEVLSGEMLPTLARKAAASGLHGFEWAVGIPGTIGGAVVMNAGAQEHCISSYLESITTLSLTGEYQRIKGKDLNFGYRQSLLQNEKLIVVSARLKLASGHAKEIRQVTNENLNHRLKTQPYQAQTCGSVFRNPEPLKAAKLIEELGLKGFRFGGAEISKIHSNFIINANQASSNDVRELIKYVKKRVFDSYGILLETEVKQCGF.

Positions 19–186 (GIGGPAEWIA…VSARLKLASG (168 aa)) constitute an FAD-binding PCMH-type domain. Residue Arg165 is part of the active site. Catalysis depends on Ser215, which acts as the Proton donor. Glu285 is a catalytic residue.

Belongs to the MurB family. Requires FAD as cofactor.

It localises to the cytoplasm. It catalyses the reaction UDP-N-acetyl-alpha-D-muramate + NADP(+) = UDP-N-acetyl-3-O-(1-carboxyvinyl)-alpha-D-glucosamine + NADPH + H(+). It functions in the pathway cell wall biogenesis; peptidoglycan biosynthesis. In terms of biological role, cell wall formation. The sequence is that of UDP-N-acetylenolpyruvoylglucosamine reductase from Prochlorococcus marinus (strain NATL2A).